A 147-amino-acid polypeptide reads, in one-letter code: Large ribosomal subunit protein uL11 (147 aa).

Belongs to the universal ribosomal protein uL11 family. Part of the ribosomal stalk of the 50S ribosomal subunit. Interacts with L10 and the large rRNA to form the base of the stalk. L10 forms an elongated spine to which L12 dimers bind in a sequential fashion forming a multimeric L10(L12)X complex. One or more lysine residues are methylated.

In terms of biological role, forms part of the ribosomal stalk which helps the ribosome interact with GTP-bound translation factors. This is Large ribosomal subunit protein uL11 from Bacteroides thetaiotaomicron (strain ATCC 29148 / DSM 2079 / JCM 5827 / CCUG 10774 / NCTC 10582 / VPI-5482 / E50).